The primary structure comprises 179 residues: Bifunctional protein PyrR (179 aa).

A PRPP-binding motif is present at residues 99 to 111 (VILVDDVLYTGRT).

This sequence belongs to the purine/pyrimidine phosphoribosyltransferase family. PyrR subfamily. Homodimer and homohexamer; in equilibrium.

The catalysed reaction is UMP + diphosphate = 5-phospho-alpha-D-ribose 1-diphosphate + uracil. Functionally, regulates transcriptional attenuation of the pyrimidine nucleotide (pyr) operon by binding in a uridine-dependent manner to specific sites on pyr mRNA. This disrupts an antiterminator hairpin in the RNA and favors formation of a downstream transcription terminator, leading to a reduced expression of downstream genes. Its function is as follows. Also displays a weak uracil phosphoribosyltransferase activity which is not physiologically significant. This is Bifunctional protein PyrR from Limosilactobacillus fermentum (strain NBRC 3956 / LMG 18251) (Lactobacillus fermentum).